Reading from the N-terminus, the 252-residue chain is 7-carboxy-7-deazaguanine synthase (252 aa).

Residues 22-24 (LQG) and arginine 37 each bind substrate. Residues 28–251 (FVGEPQAFVR…QVHKLVDFIP (224 aa)) form the Radical SAM core domain. [4Fe-4S] cluster is bound by residues cysteine 41, cysteine 45, and cysteine 48. Residue threonine 102 participates in substrate binding. Position 104 (glycine 104) interacts with S-adenosyl-L-methionine.

It belongs to the radical SAM superfamily. 7-carboxy-7-deazaguanine synthase family. Homodimer. It depends on [4Fe-4S] cluster as a cofactor. S-adenosyl-L-methionine is required as a cofactor. Mg(2+) serves as cofactor.

It catalyses the reaction 6-carboxy-5,6,7,8-tetrahydropterin + H(+) = 7-carboxy-7-deazaguanine + NH4(+). It functions in the pathway purine metabolism; 7-cyano-7-deazaguanine biosynthesis. Catalyzes the complex heterocyclic radical-mediated conversion of 6-carboxy-5,6,7,8-tetrahydropterin (CPH4) to 7-carboxy-7-deazaguanine (CDG), a step common to the biosynthetic pathways of all 7-deazapurine-containing compounds. In Methanopyrus kandleri (strain AV19 / DSM 6324 / JCM 9639 / NBRC 100938), this protein is 7-carboxy-7-deazaguanine synthase.